We begin with the raw amino-acid sequence, 146 residues long: UPF0260 protein Swit_2819 (146 aa).

Belongs to the UPF0260 family.

This is UPF0260 protein Swit_2819 from Rhizorhabdus wittichii (strain DSM 6014 / CCUG 31198 / JCM 15750 / NBRC 105917 / EY 4224 / RW1) (Sphingomonas wittichii).